A 210-amino-acid polypeptide reads, in one-letter code: MRKERLIESLRNYVSERVVEAMSRVPRELFVPEELRPMAYEDRPLPIGHGQTISAPHMVAMMCDLLDLREGMKVLEVGGGCGYHAAVMAELVGPSGHVYSVERIPELVEMARRNLERARYRNVSMILGDGTLGYSEQAPYDRISVAASAPDIPEPLKEQLRPGGRMVIPVGSYSQDLLVVTKNHDIRVERAMGVIFVPLIGKYGFKDSFW.

The active site involves Ser-54.

Belongs to the methyltransferase superfamily. L-isoaspartyl/D-aspartyl protein methyltransferase family.

It localises to the cytoplasm. The enzyme catalyses [protein]-L-isoaspartate + S-adenosyl-L-methionine = [protein]-L-isoaspartate alpha-methyl ester + S-adenosyl-L-homocysteine. Functionally, catalyzes the methyl esterification of L-isoaspartyl residues in peptides and proteins that result from spontaneous decomposition of normal L-aspartyl and L-asparaginyl residues. It plays a role in the repair and/or degradation of damaged proteins. The chain is Protein-L-isoaspartate O-methyltransferase from Methanothrix thermoacetophila (strain DSM 6194 / JCM 14653 / NBRC 101360 / PT) (Methanosaeta thermophila).